The following is a 254-amino-acid chain: Protein Thf1 (254 aa).

Residues 183–217 adopt a coiled-coil conformation; the sequence is SDKLQKDLDLYRSNLEKMEQARITMEEAIQADRRK. Residues 213–227 are compositionally biased toward basic and acidic residues; that stretch reads ADRRKREQREQEKLA. Residues 213–254 are disordered; it reads ADRRKREQREQEKLAKAAAAEAPAALEASSDNPEPETSETPS. Residues 228 to 240 show a composition bias toward low complexity; sequence KAAAAEAPAALEA. Over residues 245–254 the composition is skewed to acidic residues; sequence PEPETSETPS.

Belongs to the THF1 family.

Its function is as follows. May be involved in photosynthetic membrane biogenesis. The polypeptide is Protein Thf1 (Synechococcus elongatus (strain ATCC 33912 / PCC 7942 / FACHB-805) (Anacystis nidulans R2)).